Here is a 236-residue protein sequence, read N- to C-terminus: Eukaryotic translation initiation factor 3 subunit K (236 aa).

The PCI domain occupies 48–218 (CDCNANRTLL…EAKKAEIRED (171 aa)).

Belongs to the eIF-3 subunit K family.

It localises to the cytoplasm. Its function is as follows. Component of the eukaryotic translation initiation factor 3 (eIF-3) complex, which is involved in protein synthesis of a specialized repertoire of mRNAs and, together with other initiation factors, stimulates binding of mRNA and methionyl-tRNAi to the 40S ribosome. The eIF-3 complex specifically targets and initiates translation of a subset of mRNAs involved in cell proliferation. The protein is Eukaryotic translation initiation factor 3 subunit K of Pyricularia oryzae (strain Y34) (Rice blast fungus).